A 298-amino-acid chain; its full sequence is tRNA uridine(34) hydroxylase (298 aa).

In terms of domain architecture, Rhodanese spans 123-217 (QNPDVTLVDT…YLEEIPVAES (95 aa)). The active-site Cysteine persulfide intermediate is C177.

It belongs to the TrhO family.

It carries out the reaction uridine(34) in tRNA + AH2 + O2 = 5-hydroxyuridine(34) in tRNA + A + H2O. Catalyzes oxygen-dependent 5-hydroxyuridine (ho5U) modification at position 34 in tRNAs. The chain is tRNA uridine(34) hydroxylase from Picosynechococcus sp. (strain ATCC 27264 / PCC 7002 / PR-6) (Agmenellum quadruplicatum).